A 79-amino-acid chain; its full sequence is DNA-directed RNA polymerase subunit omega (79 aa).

It belongs to the RNA polymerase subunit omega family. As to quaternary structure, the RNAP catalytic core consists of 2 alpha, 1 beta, 1 beta' and 1 omega subunit. When a sigma factor is associated with the core the holoenzyme is formed, which can initiate transcription.

It carries out the reaction RNA(n) + a ribonucleoside 5'-triphosphate = RNA(n+1) + diphosphate. Promotes RNA polymerase assembly. Latches the N- and C-terminal regions of the beta' subunit thereby facilitating its interaction with the beta and alpha subunits. This is DNA-directed RNA polymerase subunit omega (rpoZ) from Thermotoga maritima (strain ATCC 43589 / DSM 3109 / JCM 10099 / NBRC 100826 / MSB8).